A 1357-amino-acid chain; its full sequence is Mediator of RNA polymerase II transcription subunit 13 (1357 aa).

Disordered regions lie at residues 356–391 (SCNY…GNGF) and 420–487 (DLWN…HRKE). Residues 435–451 (INPTSQQGDSARITSGS) show a composition bias toward polar residues.

Belongs to the Mediator complex subunit 13 family. As to quaternary structure, component of the SRB8-11 complex, which itself associates with the Mediator complex.

The protein localises to the nucleus. Its function is as follows. Component of the SRB8-11 complex. The SRB8-11 complex is a regulatory module of the Mediator complex which is itself involved in regulation of basal and activated RNA polymerase II-dependent transcription. The SRB8-11 complex may be involved in the transcriptional repression of a subset of genes regulated by Mediator. It may inhibit the association of the Mediator complex with RNA polymerase II to form the holoenzyme complex. The polypeptide is Mediator of RNA polymerase II transcription subunit 13 (SSN2) (Eremothecium gossypii (strain ATCC 10895 / CBS 109.51 / FGSC 9923 / NRRL Y-1056) (Yeast)).